The chain runs to 289 residues: tRNA-cytidine(32) 2-sulfurtransferase (289 aa).

The PP-loop motif signature appears at 49–54 (SGGKDS). Cys124, Cys127, and Cys215 together coordinate [4Fe-4S] cluster.

It belongs to the TtcA family. In terms of assembly, homodimer. Mg(2+) is required as a cofactor. The cofactor is [4Fe-4S] cluster.

The protein localises to the cytoplasm. It catalyses the reaction cytidine(32) in tRNA + S-sulfanyl-L-cysteinyl-[cysteine desulfurase] + AH2 + ATP = 2-thiocytidine(32) in tRNA + L-cysteinyl-[cysteine desulfurase] + A + AMP + diphosphate + H(+). Its pathway is tRNA modification. Catalyzes the ATP-dependent 2-thiolation of cytidine in position 32 of tRNA, to form 2-thiocytidine (s(2)C32). The sulfur atoms are provided by the cysteine/cysteine desulfurase (IscS) system. The sequence is that of tRNA-cytidine(32) 2-sulfurtransferase from Methylococcus capsulatus (strain ATCC 33009 / NCIMB 11132 / Bath).